A 604-amino-acid polypeptide reads, in one-letter code: Glucoamylase 1 (604 aa).

The first 25 residues, 1–25 (MQLFNLPLKVSFFLVLSYFSLLVSA), serve as a signal peptide directing secretion. An adsorption to raw starch region spans residues 26–115 (ASIPSSASVQ…EFYIKYEVSG (90 aa)). Positions 26–130 (ASIPSSASVQ…NNNSANYQVS (105 aa)) constitute a CBM21 domain. The tract at residues 116–604 (KTYYDNNNSA…SYAKAGAPAA (489 aa)) is starch degradation. Residue Asn122 is glycosylated (N-linked (GlcNAc...) asparagine). The interval 127–164 (YQVSTSKPTTTTATATTTTAPSTSTTTPPSRSEPATFP) is disordered. Residues 130 to 162 (STSKPTTTTATATTTTAPSTSTTTPPSRSEPAT) are compositionally biased toward low complexity. N-linked (GlcNAc...) asparagine glycosylation is found at Asn167, Asn230, and Asn236. Trp279 contributes to the substrate binding site. Catalysis depends on Asp336, which acts as the Proton acceptor. The active-site Proton donor is the Glu339. An N-linked (GlcNAc...) asparagine glycan is attached at Asn564.

Belongs to the glycosyl hydrolase 15 family.

It carries out the reaction Hydrolysis of terminal (1-&gt;4)-linked alpha-D-glucose residues successively from non-reducing ends of the chains with release of beta-D-glucose.. This is Glucoamylase 1 from Rhizopus oryzae (Mucormycosis agent).